The chain runs to 267 residues: MNALLSNPFKEGLRKRDTQIGLWLSSTTSYMAEIAATSGYDWLLIDGEHAPNTVQDLYHQLQAIAPYASQPVIRPIEGSKALIKQVLDIGAQTLLIPMVDTAEQARQVVSATRYPPLGQRGVGASVARAARWGRIDNYMAQANESLCLLVQVESKVALENLDAILEVEGIDGVFIGPADLSASLGYPDNAGHPEVQRIIESCIYRIRAAGKAAGFLAVDPAMAQKCLAWGANFVAVGVDTMLYTEALDSRLAMFKSVQSVSTAKRSY.

Catalysis depends on H49, which acts as the Proton acceptor. Q151 contacts substrate. E153 contacts Mg(2+). A178 and D179 together coordinate substrate. D179 contributes to the Mg(2+) binding site.

Belongs to the HpcH/HpaI aldolase family. KDR aldolase subfamily. As to quaternary structure, homohexamer. It depends on Mg(2+) as a cofactor.

It catalyses the reaction 2-dehydro-3-deoxy-L-rhamnonate = (S)-lactaldehyde + pyruvate. Functionally, catalyzes the reversible retro-aldol cleavage of 2-keto-3-deoxy-L-rhamnonate (KDR) to pyruvate and lactaldehyde. This chain is 2-keto-3-deoxy-L-rhamnonate aldolase, found in Salmonella typhi.